Consider the following 589-residue polypeptide: 3-(3-hydroxy-phenyl)propionate/3-hydroxycinnamic acid hydroxylase (589 aa).

Residues 15 to 44 and 283 to 293 each bind FAD; these read DVLIIGAGPVGLTLANTLGMAGVRVIVAEK and FRVDRILLAGD.

Belongs to the PheA/TfdB FAD monooxygenase family. The cofactor is FAD.

It catalyses the reaction 3-(3-hydroxyphenyl)propanoate + NADH + O2 + H(+) = 3-(2,3-dihydroxyphenyl)propanoate + NAD(+) + H2O. It carries out the reaction (2E)-3-(3-hydroxyphenyl)prop-2-enoate + NADH + O2 + H(+) = (2E)-3-(2,3-dihydroxyphenyl)prop-2-enoate + NAD(+) + H2O. It participates in aromatic compound metabolism; 3-phenylpropanoate degradation. Catalyzes the insertion of one atom of molecular oxygen into position 2 of the phenyl ring of 3-(3-hydroxyphenyl)propionate (3-HPP) and hydroxycinnamic acid (3HCI). This Comamonas testosteroni (Pseudomonas testosteroni) protein is 3-(3-hydroxy-phenyl)propionate/3-hydroxycinnamic acid hydroxylase.